The following is a 76-amino-acid chain: Toxin Acra III-1 (76 aa).

In terms of domain architecture, LCN-type CS-alpha/beta spans 4–67 (PGNYPLDTRG…IWDAVKNHCT (64 aa)). Intrachain disulfides connect cysteine 18–cysteine 41, cysteine 27–cysteine 46, and cysteine 31–cysteine 48.

Belongs to the long (3 C-C) scorpion toxin superfamily. Sodium channel inhibitor family. Beta subfamily. In terms of tissue distribution, expressed by the venom gland.

It is found in the secreted. Functionally, binds to sodium channels (Nav) and affects the channel activation process. The chain is Toxin Acra III-1 from Androctonus crassicauda (Arabian fat-tailed scorpion).